We begin with the raw amino-acid sequence, 479 residues long: Cruciferin PGCRURSE5 (479 aa).

A signal peptide spans 1-23 (MVKLAHLLVATFGVLLVLNGCLA). 2 disulfide bridges follow: Cys37-Cys70 and Cys113-Cys296. Residues 42-241 (LDVLQPTETI…ALKMQLRLAQ (200 aa)) form the Cupin type-1 1 domain. A Phosphothreonine modification is found at Thr116. Disordered stretches follow at residues 117–144 (FMDSQPMQGQGQQGQQGQQGQQQQGFRD), 196–219 (RTFRLAGNNPQGGSHQQQQQQQQN), and 271–291 (YESEQWRHPRGPPQSPQDNGL). The segment covering 124 to 141 (QGQGQQGQQGQQGQQQQG) has biased composition (low complexity). A Cupin type-1 2 domain is found at 302–451 (ENIDDPARAD…AFQISLEEAR (150 aa)). Phosphothreonine is present on residues Thr415 and Thr440.

This sequence belongs to the 11S seed storage protein (globulins) family. Hexamer; each subunit is composed of an acidic and a basic chain derived from a single precursor and linked by a disulfide bond.

In terms of biological role, this is a seed storage protein. This Raphanus sativus (Radish) protein is Cruciferin PGCRURSE5 (CRURS).